An 876-amino-acid polypeptide reads, in one-letter code: MELITILEKTVSPDRLELEAAQKFLERAAVENLPTFLVELSRVLANPGNSQVARVAAGLQIKNSLTSKDPDIKAQYQQRWLAIDANARREVKNYVLQTLGTETYRPSSASQCVAGIACAEIPVSQWPELIPQLVANVTNPNSTEHMKESTLEAIGYICQDIDPEQLQDKSNEILTAIIQGMRKEEPSNNVKLAATNALLNSLEFTKANFDKESERHFIMQVVCEATQCPDTRVRVAALQNLVKIMSLYYQYMETYMGPALFAITIEAMKSDIDEVALQGIEFWSNVCDEEMDLAIEASEAAEQGRPPEHTSKFYAKGALQYLVPILTQTLTKQDENDDDDDWNPCKAAGVCLMLLSTCCEDDIVPHVLPFIKEHIKNPDWRYRDAAVMAFGSILEGPEPNQLKPLVIQAMPTLIELMKDPSVVVRDTTAWTVGRICELLPEAAINDVYLAPLLQCLIEGLSAEPRVASNVCWAFSSLAEAAYEAADVADDQEEPATYCLSSSFELIVQKLLETTDRPDGHQNNLRSSAYESLMEIVKNSAKDCYPAVQKTTLVIMERLQQVLQMESHIQSTSDRIQFNDLQSLLCATLQNVLRKVQHQDALQISDVVMASLLRMFQSTAGSGGVQEDALMAVSTLVEVLGGEFLKYMEAFKPFLGIGLKNYAEYQVCLAAVGLVGDLCRALQSNILPFCDEVMQLLLENLGNENVHRSVKPQILSVFGDIALAIGGEFKKYLEVVLNTLQQASQAQVDKSDFDMVDYLNELRESCLEAYTGIVQGLKGDQENVHPDVMLVQPRVEFILSFIDHIAGDEDHTDGVVACAAGLIGDLCTAFGKDVLKLVEARPMIHELLTEGRRSKTNKAKTLATWATKELRKLKNQA.

Position 1 is an N-acetylmethionine (M1). HEAT repeat units follow at residues L3–A29, N32–K62, A85–E120, L129–D160, and S170–S201. Residue S12 is modified to Phosphoserine. In terms of domain architecture, Importin N-terminal spans A21–T101. The residue at position 211 (K211) is an N6-acetyllysine. 14 HEAT repeats span residues E212–L247, L260–E302, Y314–C359, I363–S392, P399–L438, L449–A485, S500–K537, Y544–L592, H597–L639, L644–A680, L686–I724, K729–K777, P785–A828, and L834–Q875. An essential for high affinity interaction with RPL23A region spans residues V286 to A462. Residues T329–W342 form an IAB-binding region. The tract at residues D334–D419 is ran-GTP binding. An N6-acetyllysine mark is found at K835 and K867.

Belongs to the importin beta family. Importin beta-1 subfamily. Forms a complex with an importin alpha subunit. Interacts with XPO1. Forms a heterodimer with IPO7. The KPNB1/IPO7 heterodimer interacts with H1 histone. Interacts with SNUPN. Interacts with H2A, H2B, H3 and H4 histones. Component of an import snRNP complex composed of KPNB1, SNUPN, SMN1 and ZNF259. Component of a nuclear export receptor complex composed of KPNB1, Ran, SNUPN and XPO1. Interacts with SRY. Interacts with PRKCI/atypical protein kinase C iota. Interacts with KPNA2. Interacts with KPNA7. Interacts with SNAI1 (via zinc fingers) and SNAI2 (via zinc fingers). Interacts with SLC35G1 and STIM1. Interacts with DCAF8. Interacts with RAN. Interacts with NUMA1 (via C-terminus); this interaction is inhibited by RanGTP. Interacts with ZBED1/hDREF; required for nuclear import of ZBED1/hDREF. Interacts with SRP19. Interacts with RPL23A (via BIB domain), RPS7 and RPL5. Mono-ADP-ribosylated by PARP16.

It is found in the cytoplasm. It localises to the nucleus envelope. Its function is as follows. Functions in nuclear protein import, either in association with an adapter protein, like an importin-alpha subunit, which binds to nuclear localization signals (NLS) in cargo substrates, or by acting as autonomous nuclear transport receptor. Acting autonomously, serves itself as NLS receptor. Docking of the importin/substrate complex to the nuclear pore complex (NPC) is mediated by KPNB1 through binding to nucleoporin FxFG repeats and the complex is subsequently translocated through the pore by an energy requiring, Ran-dependent mechanism. At the nucleoplasmic side of the NPC, Ran binds to importin-beta and the three components separate and importin-alpha and -beta are re-exported from the nucleus to the cytoplasm where GTP hydrolysis releases Ran from importin. The directionality of nuclear import is thought to be conferred by an asymmetric distribution of the GTP- and GDP-bound forms of Ran between the cytoplasm and nucleus. Mediates autonomously the nuclear import of ribosomal proteins RPL23A, RPS7 and RPL5. In association with IPO7, mediates the nuclear import of H1 histone. In vitro, mediates nuclear import of H2A, H2B, H3 and H4 histones. Imports MRTFA, SNAI1 and PRKCI into the nucleus. The chain is Importin subunit beta-1 (Kpnb1) from Mus musculus (Mouse).